Reading from the N-terminus, the 326-residue chain is Protease HtpX homolog (326 aa).

Transmembrane regions (helical) follow at residues 10-30 (LNMA…ALAV) and 41-61 (VGLM…QWLF). His-147 is a binding site for Zn(2+). Glu-148 is a catalytic residue. His-151 contacts Zn(2+). A run of 2 helical transmembrane segments spans residues 159 to 179 (LLMA…WIFW) and 197 to 217 (LLFL…LLVL). A Zn(2+)-binding site is contributed by Glu-224.

Belongs to the peptidase M48B family. It depends on Zn(2+) as a cofactor.

The protein localises to the cell membrane. This Saccharolobus islandicus (strain Y.N.15.51 / Yellowstone #2) (Sulfolobus islandicus) protein is Protease HtpX homolog.